Here is a 187-residue protein sequence, read N- to C-terminus: Elongation factor P (187 aa).

Lysine 33 is modified (N6-(3,6-diaminohexanoyl)-5-hydroxylysine).

Belongs to the elongation factor P family. Post-translationally, may be beta-lysylated on the epsilon-amino group of Lys-33 by the combined action of EpmA and EpmB, and then hydroxylated on the C5 position of the same residue by EpmC (if this protein is present). Lysylation is critical for the stimulatory effect of EF-P on peptide-bond formation. The lysylation moiety may extend toward the peptidyltransferase center and stabilize the terminal 3-CCA end of the tRNA. Hydroxylation of the C5 position on Lys-33 may allow additional potential stabilizing hydrogen-bond interactions with the P-tRNA.

It is found in the cytoplasm. It functions in the pathway protein biosynthesis; polypeptide chain elongation. In terms of biological role, involved in peptide bond synthesis. Alleviates ribosome stalling that occurs when 3 or more consecutive Pro residues or the sequence PPG is present in a protein, possibly by augmenting the peptidyl transferase activity of the ribosome. Modification of Lys-33 is required for alleviation. In Blochmanniella floridana, this protein is Elongation factor P.